The primary structure comprises 610 residues: GATOR complex protein NPRL3 (610 aa).

Ser-437 carries the post-translational modification Phosphoserine. Positions 474-501 (REASEDHSSLASDNIAVQPSSSHKSNFS) are disordered. Over residues 482–501 (SLASDNIAVQPSSSHKSNFS) the composition is skewed to polar residues.

Belongs to the NPR3 family. Component of the GATOR complex consisting of mio, Nup44A/Seh1, Im11, Nplr3, Nplr2, Wdr24, Wdr59 and Sec13. Within the GATOR complex, probable component of the GATOR1 subcomplex which is likely composed of Iml1, Nplr2 and Nplr3. Interacts with Nprl2.

Its subcellular location is the cytoplasm. The protein localises to the lysosome. Its function is as follows. An essential component of the GATOR subcomplex GATOR1 which functions as an inhibitor of the amino acid-sensing branch of the TORC1 signaling pathway. The two GATOR subcomplexes, GATOR1 and GATOR2, regulate the TORC1 pathway in order to mediate metabolic homeostasis, female gametogenesis and the response to amino acid limitation and complete starvation. The function of GATOR1 in negatively regulating the TORC1 pathway is essential for maintaining baseline levels of TORC1 activity under nutrient rich conditions, and for promoting survival during amino acid or complete starvation by inhibiting TORC1-dependent cell growth and promoting catabolic metabolism and autophagy. In addition, this inhibition of TORC1 is necessary to maintain female fertility under normal conditions and during periods of nutrient stress. GATOR1 and GATOR2 act at different stages of oogenesis to regulate TORC1 in order to control meiotic entry and promote oocyte growth and development. After exactly four mitotic cyst divisions, the GATOR1 complex members (Iml1, Nprl2 and Nprl3) down-regulate TORC1 to slow cellular metabolism and promote the mitotic/meiotic transition. At later stages of oogenesis, the mio and Nup44A components of the GATOR2 complex inhibit GATOR1 and thus activate TORC1 to promote meiotic progression, and drive oocyte growth and development. In Drosophila melanogaster (Fruit fly), this protein is GATOR complex protein NPRL3.